The following is a 430-amino-acid chain: Histidine--tRNA ligase (430 aa).

It belongs to the class-II aminoacyl-tRNA synthetase family. Homodimer.

The protein localises to the cytoplasm. The enzyme catalyses tRNA(His) + L-histidine + ATP = L-histidyl-tRNA(His) + AMP + diphosphate + H(+). This is Histidine--tRNA ligase from Chlamydia caviae (strain ATCC VR-813 / DSM 19441 / 03DC25 / GPIC) (Chlamydophila caviae).